The chain runs to 361 residues: UDP-N-acetylglucosamine--N-acetylmuramyl-(pentapeptide) pyrophosphoryl-undecaprenol N-acetylglucosamine transferase (361 aa).

Residues 21–23 (TGG), Asn-131, Arg-172, Ser-195, Ile-250, and Gln-295 each bind UDP-N-acetyl-alpha-D-glucosamine.

It belongs to the glycosyltransferase 28 family. MurG subfamily.

Its subcellular location is the cell inner membrane. The catalysed reaction is di-trans,octa-cis-undecaprenyl diphospho-N-acetyl-alpha-D-muramoyl-L-alanyl-D-glutamyl-meso-2,6-diaminopimeloyl-D-alanyl-D-alanine + UDP-N-acetyl-alpha-D-glucosamine = di-trans,octa-cis-undecaprenyl diphospho-[N-acetyl-alpha-D-glucosaminyl-(1-&gt;4)]-N-acetyl-alpha-D-muramoyl-L-alanyl-D-glutamyl-meso-2,6-diaminopimeloyl-D-alanyl-D-alanine + UDP + H(+). The protein operates within cell wall biogenesis; peptidoglycan biosynthesis. Cell wall formation. Catalyzes the transfer of a GlcNAc subunit on undecaprenyl-pyrophosphoryl-MurNAc-pentapeptide (lipid intermediate I) to form undecaprenyl-pyrophosphoryl-MurNAc-(pentapeptide)GlcNAc (lipid intermediate II). The sequence is that of UDP-N-acetylglucosamine--N-acetylmuramyl-(pentapeptide) pyrophosphoryl-undecaprenol N-acetylglucosamine transferase from Solibacter usitatus (strain Ellin6076).